A 149-amino-acid chain; its full sequence is Transcriptional repressor NrdR (149 aa).

Residues 3–34 fold into a zinc finger; that stretch reads CPFCFAVDTKVIDSRLVGEGSSVRRRRQCLVC. The ATP-cone domain maps to 49 to 139; that stretch reads PRVIKSNDVR…VYRSFEDIKD (91 aa).

Belongs to the NrdR family. Requires Zn(2+) as cofactor.

Its function is as follows. Negatively regulates transcription of bacterial ribonucleotide reductase nrd genes and operons by binding to NrdR-boxes. This Salmonella schwarzengrund (strain CVM19633) protein is Transcriptional repressor NrdR.